We begin with the raw amino-acid sequence, 78 residues long: Protein Vpr (78 aa).

The tract at residues 1 to 42 (MEQAPEDQGPQRKPHNEWTLELLEELKNEAVRHFPRIWLHGL) is homooligomerization.

Belongs to the HIV-1 VPR protein family. In terms of assembly, homooligomer, may form homodimer. Interacts with p6-gag region of the Pr55 Gag precursor protein through a (Leu-X-X)4 motif near the C-terminus of the P6gag protein. Interacts with host UNG. May interact with host RAD23A/HHR23A. Interacts with host VPRBP/DCAF1, leading to hijack the CUL4A-RBX1-DDB1-DCAF1/VPRBP complex, mediating ubiquitination of host proteins such as TERT and ZGPAT and arrest of the cell cycle in G2 phase. Phosphorylated on several residues by host. These phosphorylations regulate VPR activity for the nuclear import of the HIV-1 pre-integration complex.

Its subcellular location is the virion. It is found in the host nucleus. It localises to the host extracellular space. Functionally, during virus replication, may deplete host UNG protein, and incude G2-M cell cycle arrest. Acts by targeting specific host proteins for degradation by the 26S proteasome, through association with the cellular CUL4A-DDB1 E3 ligase complex by direct interaction with host VPRPB/DCAF-1. Cell cycle arrest reportedly occurs within hours of infection and is not blocked by antiviral agents, suggesting that it is initiated by the VPR carried into the virion. Additionally, VPR induces apoptosis in a cell cycle dependent manner suggesting that these two effects are mechanistically linked. Detected in the serum and cerebrospinal fluid of AIDS patient, VPR may also induce cell death to bystander cells. In terms of biological role, during virus entry, plays a role in the transport of the viral pre-integration (PIC) complex to the host nucleus. This function is crucial for viral infection of non-dividing macrophages. May act directly at the nuclear pore complex, by binding nucleoporins phenylalanine-glycine (FG)-repeat regions. This Homo sapiens (Human) protein is Protein Vpr.